An 84-amino-acid chain; its full sequence is Large ribosomal subunit protein bL27 (84 aa).

A disordered region spans residues 1–21 (MAHKKGAGSTKNGRDSKPKML).

This sequence belongs to the bacterial ribosomal protein bL27 family.

The polypeptide is Large ribosomal subunit protein bL27 (Dehalococcoides mccartyi (strain ATCC BAA-2100 / JCM 16839 / KCTC 5957 / BAV1)).